We begin with the raw amino-acid sequence, 284 residues long: MVLMIVSGRSGSGKSVALRALEDMGFYCVDNLPVVLLPDLARTLADRQISAAVSIDVRNIPESPEIFEQAMNNLPGAFSPQLLFLDADRNTLIRRYSDTRRLHPLSSKNLSLESAIDKESDLLEPLRSRADLIVDTSEMSVHELAEMLRTRLLGKRERELTMVFESFGFKHGIPIDADYVFDVRFLPNPHWDPKLRPMTGLDKPVAAFLDRHTEVHNFIYQTRSYLELWLPMLETNNRSYLTVAIGCTGGKHRSVYIAEQLADYFRSRGKNVQSRHRTLEKRKT.

ATP is bound at residue 8 to 15 (GRSGSGKS). GTP is bound at residue 56–59 (DVRN). An RNA-binding region spans residues 266-284 (RSRGKNVQSRHRTLEKRKT).

It belongs to the RapZ-like family. RapZ subfamily. In terms of assembly, homotrimer.

Modulates the synthesis of GlmS, by affecting the processing and stability of the regulatory small RNA GlmZ. When glucosamine-6-phosphate (GlcN6P) concentrations are high in the cell, RapZ binds GlmZ and targets it to cleavage by RNase E. Consequently, GlmZ is inactivated and unable to activate GlmS synthesis. Under low GlcN6P concentrations, RapZ is sequestered and inactivated by an other regulatory small RNA, GlmY, preventing GlmZ degradation and leading to synthesis of GlmS. The protein is RNase adapter protein RapZ of Salmonella typhi.